Reading from the N-terminus, the 78-residue chain is Antitoxin VapB2 (78 aa).

Positions 4 to 44 (AKIFMNGQSQAVRLPKEFRFSVKEVSVIPLGKGIVLQPLPN) constitute a SpoVT-AbrB domain.

This sequence belongs to the VapB family. In terms of assembly, forms complexes with VapC2; probably VapC2(4):VapB2(2) in the absence of DNA, and VapC2(4):VapB2(4) in the presence of DNA. Crystallizes as heterodimers with stoichiometry VapC2(4):VapB2(4) in the presence of its probable promoter DNA. The heterodimers are in contact via alternative VapC-VapC and VapB-VapB interactions. This subunit contacts DNA.

Functionally, antitoxin component of a type II toxin-antitoxin (TA) system. Upon expression in E.coli or S.cerevisiae neutralizes the effect of cognate toxin VapC2, partially inhibits the RNase activity of VapC2. The sequence is that of Antitoxin VapB2 (vapB2) from Rickettsia felis (strain ATCC VR-1525 / URRWXCal2) (Rickettsia azadi).